Consider the following 223-residue polypeptide: Endonuclease V (223 aa).

Asp-35 and Asp-103 together coordinate Mg(2+).

The protein belongs to the endonuclease V family. Mg(2+) is required as a cofactor.

The protein localises to the cytoplasm. The catalysed reaction is Endonucleolytic cleavage at apurinic or apyrimidinic sites to products with a 5'-phosphate.. Its function is as follows. DNA repair enzyme involved in the repair of deaminated bases. Selectively cleaves double-stranded DNA at the second phosphodiester bond 3' to a deoxyinosine leaving behind the intact lesion on the nicked DNA. This chain is Endonuclease V, found in Salmonella enteritidis PT4 (strain P125109).